The following is a 64-amino-acid chain: Fatty acid synthase (64 aa).

A Carrier domain is found at 1-64 (AEGEGQRDLL…VLSMREVRQL (64 aa)). S38 is subject to O-(pantetheine 4'-phosphoryl)serine; alternate. S38 is subject to Phosphoserine; alternate.

Homodimer which is arranged in a head to tail fashion. Interacts with CEACAM1; this interaction is insulin and phosphorylation-dependent; reduces fatty-acid synthase activity.

It is found in the cytoplasm. The protein localises to the melanosome. The enzyme catalyses acetyl-CoA + n malonyl-CoA + 2n NADPH + 2n H(+) = a long-chain fatty acid + (n+1) CoA + n CO2 + 2n NADP(+).. Fatty acid synthetase catalyzes the formation of long-chain fatty acids from acetyl-CoA, malonyl-CoA and NADPH. This multifunctional protein has 7 catalytic activities as an acyl carrier protein. The chain is Fatty acid synthase (FASN) from Oryctolagus cuniculus (Rabbit).